The primary structure comprises 1706 residues: Histone acetyltransferase HAC12 (1706 aa).

Disordered regions lie at residues 1 to 33 (MNVQ…MQNL), 251 to 284 (TNNN…NSHM), 397 to 456 (VSRV…LGKT), and 524 to 543 (QNSQ…SDSS). Positions 397–406 (VSRVNSSLSH) are enriched in polar residues. Low complexity predominate over residues 407–434 (QQQFQQPPNRFQQQPNQIQQQQQQFLNQ). The TAZ-type 1 zinc-finger motif lies at 637 to 716 (HDPKFKNQQR…DPRCPVCVPV (80 aa)). A disordered region spans residues 791–909 (TESCKSSIVS…PELTSKSRKP (119 aa)). Residues 794-805 (CKSSIVSTTEAD) show a composition bias toward polar residues. Basic and acidic residues-rich tracts occupy residues 809 to 829 (DAER…KVEI) and 870 to 896 (PKQE…KEEL). The segment at 998–1075 (HYFCIPCYNE…EYTCPYCYVI (78 aa)) adopts a PHD-type zinc-finger fold. The region spanning 1090 to 1526 (VLGAKDLPRT…VLYHLHNPTA (437 aa)) is the CBP/p300-type HAT domain. Residues 1213-1215 (LDS), 1232-1233 (RT), and tryptophan 1288 each bind acetyl-CoA. ZZ-type zinc fingers lie at residues 1408 to 1471 (HLQH…IADI) and 1528 to 1581 (AFVT…SLAD). Zn(2+)-binding residues include cysteine 1413, cysteine 1416, cysteine 1428, cysteine 1431, cysteine 1437, cysteine 1440, histidine 1453, histidine 1461, cysteine 1533, cysteine 1536, cysteine 1548, cysteine 1551, cysteine 1557, cysteine 1560, histidine 1569, and histidine 1571. A TAZ-type 2 zinc finger spans residues 1588-1671 (EARQLRVLQL…ECDVPRCGDL (84 aa)).

The protein localises to the nucleus. It carries out the reaction L-lysyl-[protein] + acetyl-CoA = N(6)-acetyl-L-lysyl-[protein] + CoA + H(+). Its function is as follows. Acetyltransferase enzyme. Acetylates histones, giving a specific tag for transcriptional activation. The chain is Histone acetyltransferase HAC12 (HAC12) from Arabidopsis thaliana (Mouse-ear cress).